Consider the following 101-residue polypeptide: Small ribosomal subunit protein bS18c (101 aa).

The protein belongs to the bacterial ribosomal protein bS18 family. In terms of assembly, part of the 30S ribosomal subunit.

The protein resides in the plastid. It localises to the chloroplast. The polypeptide is Small ribosomal subunit protein bS18c (Carica papaya (Papaya)).